A 1051-amino-acid polypeptide reads, in one-letter code: Leucine zipper protein 1 (1051 aa).

Position 2 is an N-acetylalanine (Ala-2). A coiled-coil region spans residues 11 to 354 (ASNRHLRFKL…KLQVKKQKEL (344 aa)). 4 disordered regions span residues 247–293 (ISST…KDLN), 374–401 (RTKL…HKRE), 432–554 (AAKA…SQVT), and 569–601 (ASSQ…SKAP). The segment covering 254–293 (KESRRKGSLDYLKQVENETRDKSENEKNRNQEDNKVKDLN) has biased composition (basic and acidic residues). Residues Ser-256, Ser-261, Ser-395, Ser-513, Ser-571, Ser-575, Ser-612, and Ser-660 each carry the phosphoserine modification. Residues 569–578 (ASSQRASSEG) show a composition bias toward polar residues. The disordered stretch occupies residues 675–727 (VNTTITPEPEPKLQPNSREKVKSRGGTRTPLFENDKNAAVENDSAKSMRSSSN). At Thr-680 the chain carries Phosphothreonine. Ser-691 is modified (phosphoserine). Residues 707-720 (ENDKNAAVENDSAK) show a composition bias toward basic and acidic residues. Position 746 is a phosphoserine (Ser-746). The span at 789–799 (VTSKVTSSITI) shows a compositional bias: low complexity. Residues 789-837 (VTSKVTSSITIYPSDSSGPRAVPTEAPRERHTSTSNIQVGPPELTSVSN) form a disordered region. Residues 834 to 884 (SVSNHISSPLELSIHKHDITLQLTEAERVGDGSPKNRAETVVSRSSILIKP) are required for interaction with FLNA. Position 906 is a phosphoserine (Ser-906). Basic and acidic residues predominate over residues 929-938 (RDLKCSEDPP). The disordered stretch occupies residues 929–1000 (RDLKCSEDPP…TQSSLTASEV (72 aa)). Polar residues-rich tracts occupy residues 946–958 (EATN…SSTD) and 989–999 (RRTQSSLTASE). Thr-957 is subject to Phosphothreonine. Ser-993 carries the phosphoserine modification.

Component of the CERF-1 ISWI chromatin remodeling complex (also called the CECR2-containing remodeling factor (CERF) complex) at least composed of CECR2 and SMARCA1. Component of the CERF-5 ISWI chromatin remodeling complex at least composed of CECR2 and SMARCA5/SNF2H. LUZP1 is detected as part of the CERF-1 and CERF-5 complexes in embryonic stem (ES) cells where it is involved in complex stabilization but is not detected in the complexes in the testis. Interacts (via C-terminus) with LIMA1/EPLIN; both proteins restrict ciliation and may work together to regulate this process. Interacts with myosin light chain MYL9; the interaction results in inhibition of phosphorylation of MYL9 by DAPK3. Interacts with DAPK3; the interaction is likely to occur throughout the cell cycle and reduces the LUZP1-mediated suppression of MYL9 phosphorylation. Interacts with the chromosomal passenger complex (CPC); CPC kinase activity is required for localization of LUZP1 to the centromere. In terms of tissue distribution, expressed in cerebral cortex, cerebellum, hippocampus and brain stem.

It is found in the cytoplasm. It localises to the cytoskeleton. The protein localises to the microtubule organizing center. Its subcellular location is the centrosome. The protein resides in the cilium basal body. It is found in the midbody. It localises to the chromosome. The protein localises to the centromere. Its subcellular location is the spindle. The protein resides in the stress fiber. It is found in the nucleus. It localises to the cell projection. The protein localises to the dendrite. Its subcellular location is the perikaryon. The protein resides in the cell junction. It is found in the tight junction. Functionally, F-actin cross-linking protein. Stabilizes actin and acts as a negative regulator of primary cilium formation. Positively regulates the phosphorylation of both myosin II and protein phosphatase 1 regulatory subunit PPP1R12A/MYPT1 and promotes the assembly of myosin II stacks within actin stress fibers. Inhibits the phosphorylation of myosin light chain MYL9 by DAPK3 and suppresses the constriction velocity of the contractile ring during cytokinesis. Binds to microtubules and promotes epithelial cell apical constriction by up-regulating levels of diphosphorylated myosin light chain (MLC) through microtubule-dependent inhibition of MLC dephosphorylation by myosin phosphatase. Involved in regulation of cell migration, nuclear size and centriole number, probably through regulation of the actin cytoskeleton. Component of the CERF-1 and CERF-5 chromatin remodeling complexes in embryonic stem cells where it acts to stabilize the complexes. Plays a role in embryonic brain and cardiovascular development. The sequence is that of Leucine zipper protein 1 (Luzp1) from Rattus norvegicus (Rat).